Here is a 202-residue protein sequence, read N- to C-terminus: Small ribosomal subunit protein uS4c (202 aa).

The S4 RNA-binding domain maps to 90–150 (MRLDNVIFRL…NQRKSQAIIN (61 aa)).

This sequence belongs to the universal ribosomal protein uS4 family. Part of the 30S ribosomal subunit. Contacts protein S5. The interaction surface between S4 and S5 is involved in control of translational fidelity.

It localises to the plastid. It is found in the chloroplast. Its function is as follows. One of the primary rRNA binding proteins, it binds directly to 16S rRNA where it nucleates assembly of the body of the 30S subunit. In terms of biological role, with S5 and S12 plays an important role in translational accuracy. The sequence is that of Small ribosomal subunit protein uS4c (rps4) from Canalohypopterygium tamariscinum (Moss).